The following is a 428-amino-acid chain: 3-phosphoshikimate 1-carboxyvinyltransferase (428 aa).

Residues Lys21, Ser22, and Arg26 each contribute to the 3-phosphoshikimate site. Lys21 contributes to the phosphoenolpyruvate binding site. Phosphoenolpyruvate is bound by residues Gly94 and Arg122. Residues Ser166, Ser167, Gln168, Ser194, Asp306, and Lys333 each coordinate 3-phosphoshikimate. Gln168 is a binding site for phosphoenolpyruvate. Catalysis depends on Asp306, which acts as the Proton acceptor. 3 residues coordinate phosphoenolpyruvate: Arg337, Arg379, and Lys405.

This sequence belongs to the EPSP synthase family. Monomer.

Its subcellular location is the cytoplasm. It carries out the reaction 3-phosphoshikimate + phosphoenolpyruvate = 5-O-(1-carboxyvinyl)-3-phosphoshikimate + phosphate. It functions in the pathway metabolic intermediate biosynthesis; chorismate biosynthesis; chorismate from D-erythrose 4-phosphate and phosphoenolpyruvate: step 6/7. Its function is as follows. Catalyzes the transfer of the enolpyruvyl moiety of phosphoenolpyruvate (PEP) to the 5-hydroxyl of shikimate-3-phosphate (S3P) to produce enolpyruvyl shikimate-3-phosphate and inorganic phosphate. The chain is 3-phosphoshikimate 1-carboxyvinyltransferase from Clostridium acetobutylicum (strain ATCC 824 / DSM 792 / JCM 1419 / IAM 19013 / LMG 5710 / NBRC 13948 / NRRL B-527 / VKM B-1787 / 2291 / W).